Reading from the N-terminus, the 159-residue chain is Cell number regulator 4 (159 aa).

A helical membrane pass occupies residues 52–74; sequence LAGLLYCLLLHAGVAVVPCHCIY.

This sequence belongs to the cornifelin family. In terms of tissue distribution, expressed in roots, coleoptiles, leaves, stalks, apical meristems, immature ears, endosperm, pericarp and tassel spikelets.

It is found in the membrane. The chain is Cell number regulator 4 (CNR4) from Zea mays (Maize).